The sequence spans 343 residues: Stimulator of interferon genes protein homolog (343 aa).

An N-linked (GlcNAc...) asparagine glycan is attached at Asn84. Transmembrane regions (helical) follow at residues 87 to 107 and 109 to 129; these read IYLI…TGNY and NVMP…WSFT. Asn157 serves as a coordination point for 3',2'-cGAMP. The N-linked (GlcNAc...) asparagine glycan is linked to Asn187. Residues 195–215 form a helical membrane-spanning segment; that stretch reads LVILIPDEMFVNGVLESHLLD. Positions 232, 235, 255, 258, and 262 each coordinate 3',2'-cGAMP. Asn270 and Asn333 each carry an N-linked (GlcNAc...) asparagine glycan.

This sequence belongs to the STING family.

The protein localises to the endoplasmic reticulum membrane. Its function is as follows. Facilitator of innate immune signaling that binds cyclic dinucleotides produced in response to infection by bacteria and/or viruses, and promotes the activation of the NF-kappa-B transcription factor Rel (Relish). Recognizes and binds cyclic di-GMP (c-di-GMP), a cyclic dinucleotide messenger produced by bacteria such as L.monocytogenes, leading to activation of the peptidoglycan recognition protein (IMD) signaling pathway and activation of Rel (Relish). Innate immune response is triggered in response to double-stranded RNA from viruses delivered to the cytoplasm: Sting acts by specifically binding cyclic dinucleotides 3',2'-cGAMP and 2',3'-cGAMP produced by cGlr1 and cGlr2 in response to RNA virus in the cytosol. Has a strong preference for 3',2'-cGAMP compared to other cyclic dinucleotides such as 2',3'-cGAMP or 3'3'-c-di-GMP. Upon binding to 3',2'-cGAMP, activates an antiviral immune response, leading to the activation of Rel (Relish). Activated in brain in response to Zika virus infection, leading to autophagy. The polypeptide is Stimulator of interferon genes protein homolog (Drosophila melanogaster (Fruit fly)).